The chain runs to 417 residues: Tyrosine--tRNA ligase (417 aa).

Position 39 (tyrosine 39) interacts with L-tyrosine. Positions 44–53 (PTASSLHAGS) match the 'HIGH' region motif. The L-tyrosine site is built by tyrosine 176 and glutamine 180. Residues 236-240 (KMGKS) carry the 'KMSKS' region motif. Lysine 239 lines the ATP pocket. Residues 350–417 (TGLLILLVQA…KKKHVLIKPL (68 aa)) enclose the S4 RNA-binding domain.

It belongs to the class-I aminoacyl-tRNA synthetase family. TyrS type 1 subfamily. Homodimer.

The protein localises to the cytoplasm. It catalyses the reaction tRNA(Tyr) + L-tyrosine + ATP = L-tyrosyl-tRNA(Tyr) + AMP + diphosphate + H(+). Functionally, catalyzes the attachment of tyrosine to tRNA(Tyr) in a two-step reaction: tyrosine is first activated by ATP to form Tyr-AMP and then transferred to the acceptor end of tRNA(Tyr). In Bartonella henselae (strain ATCC 49882 / DSM 28221 / CCUG 30454 / Houston 1) (Rochalimaea henselae), this protein is Tyrosine--tRNA ligase.